Consider the following 572-residue polypeptide: Zyxin (572 aa).

Ala-2 carries the post-translational modification N-acetylalanine. The interval 23–351 (QKKFGPVVAP…VRSPGAPGPL (329 aa)) is disordered. Composition is skewed to pro residues over residues 63-78 (IPPPPPEDFPLPPPPL) and 93-108 (FPPPPPPIEESFPPAP). Ser-116, Ser-142, Ser-143, Ser-169, and Ser-170 each carry phosphoserine. Residues 143–156 (SIDLEIDSLSSLLD) show a composition bias toward low complexity. Thr-179 is subject to Phosphothreonine. The segment covering 202–239 (SPSSSQPLPQVPAPAQSQTQFHVQPQPQPKPQVQLHVQ) has biased composition (low complexity). Residues 240–252 (SQTQPVSLANTQP) show a composition bias toward polar residues. Arg-253 is subject to Asymmetric dimethylarginine. Residues 253–265 (RGPPASSPAPAPK) show a composition bias toward pro residues. A Phosphoserine modification is found at Ser-259. Lys-265 carries the N6-acetyllysine modification. Ser-267 carries the phosphoserine modification. Residue Thr-270 is modified to Phosphothreonine. Residue Lys-272 is modified to N6-acetyllysine. Residue Thr-274 is modified to Phosphothreonine. Residue Lys-279 is modified to N6-acetyllysine. Phosphoserine occurs at positions 281, 288, and 308. Positions 305-318 (GTGSPQPPSFTYAQ) are enriched in polar residues. Over residues 319–330 (QREKPRVQEKQH) the composition is skewed to basic and acidic residues. Phosphoserine is present on Ser-344. 3 consecutive LIM zinc-binding domains span residues 384 to 443 (CGRC…TLEK), 444 to 503 (CNTC…YAPR), and 504 to 570 (CSVC…TARA).

The protein belongs to the zyxin/ajuba family. In terms of assembly, interacts with HPV type 6 protein E6. Does not interact significantly with E6 proteins from HPV types 11, 16, or 18. Interacts, via the Pro-rich regions, with the EVH1 domains of ENAH, EVL and VASP. Interacts with the first LIM domain of TES. Interacts with NEBL (isoform 2). Interacts with SYNPO2. As to quaternary structure, (Microbial infection) Interacts with human papillomavirus type 6/HPV6 protein E6. Does not interact significantly with E6 proteins from HPV types 11, 16, or 18.

It is found in the cytoplasm. The protein localises to the cytoskeleton. The protein resides in the nucleus. Its subcellular location is the cell junction. It localises to the focal adhesion. In terms of biological role, adhesion plaque protein. Binds alpha-actinin and the CRP protein. Important for targeting TES and ENA/VASP family members to focal adhesions and for the formation of actin-rich structures. May be a component of a signal transduction pathway that mediates adhesion-stimulated changes in gene expression. This Homo sapiens (Human) protein is Zyxin (ZYX).